The following is a 607-amino-acid chain: Polypeptide N-acetylgalactosaminyltransferase 18 (607 aa).

At 1-12 the chain is on the cytoplasmic side; the sequence is MVCTRKTKTLVS. Residues 13-35 traverse the membrane as a helical; Signal-anchor for type II membrane protein segment; sequence TCVILSGMTNIICLLYVGWVTNY. Residues 36-607 are Lumenal-facing; that stretch reads IASVYVRGQE…ITNVLRSLAS (572 aa). 5 cysteine pairs are disulfide-bonded: cysteine 144–cysteine 377, cysteine 368–cysteine 447, cysteine 482–cysteine 498, cysteine 530–cysteine 543, and cysteine 571–cysteine 591. Residue asparagine 146 is glycosylated (N-linked (GlcNAc...) asparagine). A catalytic subdomain A region spans residues 153 to 267; that stretch reads LPEVSIVFIF…VGWAEPVLTR (115 aa). Residue aspartate 194 coordinates substrate. Asparagine 195 carries N-linked (GlcNAc...) asparagine glycosylation. Mn(2+)-binding residues include aspartate 251 and histidine 253. N-linked (GlcNAc...) asparagine glycosylation is present at asparagine 320. The catalytic subdomain B stretch occupies residues 324–385; it reads PIRSPALIGC…PCSRIAHIER (62 aa). A Mn(2+)-binding site is contributed by histidine 382. The substrate site is built by arginine 385 and tyrosine 390. Positions 469–599 constitute a Ricin B-type lectin domain; that stretch reads AYGVLQNSLK…KCSGQHWSIT (131 aa).

Belongs to the glycosyltransferase 2 family. GalNAc-T subfamily. Mn(2+) is required as a cofactor.

The protein resides in the golgi apparatus membrane. It carries out the reaction L-seryl-[protein] + UDP-N-acetyl-alpha-D-galactosamine = a 3-O-[N-acetyl-alpha-D-galactosaminyl]-L-seryl-[protein] + UDP + H(+). It catalyses the reaction L-threonyl-[protein] + UDP-N-acetyl-alpha-D-galactosamine = a 3-O-[N-acetyl-alpha-D-galactosaminyl]-L-threonyl-[protein] + UDP + H(+). It participates in protein modification; protein glycosylation. Functionally, catalyzes the initial reaction in O-linked oligosaccharide biosynthesis, the transfer of an N-acetyl-D-galactosamine (GalNAc) residue from UDP-GalNAc to a serine or threonine residue on the protein receptor. This is Polypeptide N-acetylgalactosaminyltransferase 18 (GALNT18) from Homo sapiens (Human).